The following is a 173-amino-acid chain: Small ribosomal subunit protein uS5 (173 aa).

Residues 18-81 (LREKMIAVNR…EQARRGMFKV (64 aa)) enclose the S5 DRBM domain.

The protein belongs to the universal ribosomal protein uS5 family. As to quaternary structure, part of the 30S ribosomal subunit. Contacts proteins S4 and S8.

In terms of biological role, with S4 and S12 plays an important role in translational accuracy. Located at the back of the 30S subunit body where it stabilizes the conformation of the head with respect to the body. This chain is Small ribosomal subunit protein uS5, found in Bordetella petrii (strain ATCC BAA-461 / DSM 12804 / CCUG 43448).